The chain runs to 504 residues: MNKAPAQMSRFNIAPDMDSSSTNSNEYTNYQDHASKVPLNGIQYSDVEAESQNFLSDHHLGKKKYEAEYSPGSASFGMSVFNLGNAIMGSGILGLSYAMANTGIAMFVILLVAVAIFSLYSVHLLLKTANEGGSLVYEQLGYKAFGIPGKLAASCSITMQNFGAMASYLYIVKYELPIVIRAFLDSNDNAWYTNGDYLVLIVTMSIILPLSLLKNLGYLGYTSGFSLLCMVFFLIVVIYKKFQIPCPLPENFINITVNVSQPPQTNNSTDEECCKPKYFIFNSQTVYAVPILTFAFVCHPAILPMYEELKDRSRRKMQNVANVSFLGMFIMYLLAALFGYLTFNEAVEPELLHTYSKVYNFDVVLLIVRLAVLTAVTLTVPVVLFPIRTSVNHLLGASKEFSWPRHICITVALLVCVNILVIFVPTIRDIFGFIGASAAAMLIFILPSAFYIKLVKKESMKSVQKIGATLFLIMGFLVMTGSMALIIMDWIHNALSSEEHTGGH.

Residues 1 to 28 (MNKAPAQMSRFNIAPDMDSSSTNSNEYT) form a disordered region. Over 1–79 (MNKAPAQMSR…SPGSASFGMS (79 aa)) the chain is Cytoplasmic. Residues 1 to 99 (MNKAPAQMSR…SGILGLSYAM (99 aa)) are regulates protein turnover upon amino acid deprivation. Over residues 19 to 28 (SSSTNSNEYT) the composition is skewed to low complexity. Residues 80 to 99 (VFNLGNAIMGSGILGLSYAM) form a helical membrane-spanning segment. A Na(+)-binding site is contributed by N85. At 100–105 (ANTGIA) the chain is on the extracellular side. The chain crosses the membrane as a helical span at residues 106-126 (MFVILLVAVAIFSLYSVHLLL). Topologically, residues 127–161 (KTANEGGSLVYEQLGYKAFGIPGKLAASCSITMQN) are cytoplasmic. Residues 162-180 (FGAMASYLYIVKYELPIVI) traverse the membrane as a helical segment. Residues 181-189 (RAFLDSNDN) are Extracellular-facing. Residues 190–210 (AWYTNGDYLVLIVTMSIILPL) traverse the membrane as a helical segment. At 211–218 (SLLKNLGY) the chain is on the cytoplasmic side. The helical transmembrane segment at 219–239 (LGYTSGFSLLCMVFFLIVVIY) threads the bilayer. Over 240–285 (KKFQIPCPLPENFINITVNVSQPPQTNNSTDEECCKPKYFIFNSQT) the chain is Extracellular. C246 and C274 are joined by a disulfide. N-linked (GlcNAc...) asparagine glycosylation is found at N254 and N258. A helical membrane pass occupies residues 286-306 (VYAVPILTFAFVCHPAILPMY). Residues 307-322 (EELKDRSRRKMQNVAN) are Cytoplasmic-facing. A helical transmembrane segment spans residues 323–343 (VSFLGMFIMYLLAALFGYLTF). Topologically, residues 344-364 (NEAVEPELLHTYSKVYNFDVV) are extracellular. Residues 365 to 385 (LLIVRLAVLTAVTLTVPVVLF) traverse the membrane as a helical segment. T379 contributes to the Na(+) binding site. At 386 to 406 (PIRTSVNHLLGASKEFSWPRH) the chain is on the cytoplasmic side. A helical membrane pass occupies residues 407 to 427 (ICITVALLVCVNILVIFVPTI). Residues 428 to 429 (RD) lie on the Extracellular side of the membrane. Residues 430 to 450 (IFGFIGASAAAMLIFILPSAF) form a helical membrane-spanning segment. Topologically, residues 451 to 465 (YIKLVKKESMKSVQK) are cytoplasmic. The chain crosses the membrane as a helical span at residues 466–488 (IGATLFLIMGFLVMTGSMALIIM). Over 489–504 (DWIHNALSSEEHTGGH) the chain is Extracellular.

Belongs to the amino acid/polyamine transporter 2 family.

Its subcellular location is the cell membrane. It carries out the reaction L-alanine(in) + Na(+)(in) = L-alanine(out) + Na(+)(out). It catalyses the reaction glycine(in) + Na(+)(in) = glycine(out) + Na(+)(out). The enzyme catalyses L-serine(in) + Na(+)(in) = L-serine(out) + Na(+)(out). The catalysed reaction is L-proline(in) + Na(+)(in) = L-proline(out) + Na(+)(out). It carries out the reaction L-methionine(in) + Na(+)(in) = L-methionine(out) + Na(+)(out). It catalyses the reaction L-histidine(in) + Na(+)(in) = L-histidine(out) + Na(+)(out). The enzyme catalyses L-asparagine(in) + Na(+)(in) = L-asparagine(out) + Na(+)(out). The catalysed reaction is L-glutamine(in) + Na(+)(in) = L-glutamine(out) + Na(+)(out). It carries out the reaction L-threonine(in) + Na(+)(in) = L-threonine(out) + Na(+)(out). It catalyses the reaction L-leucine(in) + Na(+)(in) = L-leucine(out) + Na(+)(out). The enzyme catalyses L-phenylalanine(in) + Na(+)(in) = L-phenylalanine(out) + Na(+)(out). Inhibited by N-methyl-D-glucamine. Inhibited by choline. Allosteric regulation of sodium ions binding by pH. Its function is as follows. Symporter that cotransports neutral amino acids and sodium ions from the extracellular to the intracellular side of the cell membrane. The transport is pH-sensitive, Li(+)-intolerant, electrogenic, driven by the Na(+) electrochemical gradient and cotransports of neutral amino acids and sodium ions with a stoichiometry of 1:1. The chain is Sodium-coupled neutral amino acid symporter 2 from Danio rerio (Zebrafish).